We begin with the raw amino-acid sequence, 398 residues long: Cyclin-dependent kinase D-1 (398 aa).

A Protein kinase domain is found at 11-291 (YLKREVLGQG…IQQALKHRYF (281 aa)). ATP contacts are provided by residues 17–25 (LGQGTYGVV) and lysine 40. Tyrosine 22 is modified (phosphotyrosine). Aspartate 133 functions as the Proton acceptor in the catalytic mechanism. Phosphoserine is present on serine 160. Phosphothreonine is present on threonine 166. Residues 296 to 318 (SPTDPLKLPRPVSKQDAKSSDSK) form a disordered region. The segment covering 308–318 (SKQDAKSSDSK) has biased composition (basic and acidic residues).

This sequence belongs to the protein kinase superfamily. CMGC Ser/Thr protein kinase family. CDC2/CDKX subfamily. Post-translationally, autophosphorylated. As to expression, expressed at low levels in suspension cell culture, but not in plant organs.

Its subcellular location is the nucleus. The enzyme catalyses L-seryl-[protein] + ATP = O-phospho-L-seryl-[protein] + ADP + H(+). It catalyses the reaction L-threonyl-[protein] + ATP = O-phospho-L-threonyl-[protein] + ADP + H(+). The catalysed reaction is [DNA-directed RNA polymerase] + ATP = phospho-[DNA-directed RNA polymerase] + ADP + H(+). The protein is Cyclin-dependent kinase D-1 (CDKD-1) of Arabidopsis thaliana (Mouse-ear cress).